The sequence spans 432 residues: UDP-glucosyltransferase B1 (432 aa).

This sequence belongs to the UDP-glycosyltransferase family.

The enzyme catalyses (9Z)-17-hydroxyoctadec-9-enoate 17-O-beta-D-glucoside + UDP-alpha-D-glucose = (9Z)-17-hydroxyoctadec-9-enoate 17-O-sophoroside + UDP + H(+). In terms of biological role, catalyzes the second glycosylation step of sophorolipid biosynthesis, the further glucosylation of the previoulsy formed glucolipid to give rise to an acidic sophorolipid. The polypeptide is UDP-glucosyltransferase B1 (Starmerella bombicola (Yeast)).